Here is a 913-residue protein sequence, read N- to C-terminus: Valine--tRNA ligase (913 aa).

The short motif at 49–59 (PNVTGNLHLGH) is the 'HIGH' region element. The short motif at 544-548 (KMSKS) is the 'KMSKS' region element. Lys547 lines the ATP pocket. Residues 851–912 (DWVKKQQKRL…ERLEGVLAQL (62 aa)) are a coiled coil.

It belongs to the class-I aminoacyl-tRNA synthetase family. ValS type 1 subfamily. In terms of assembly, monomer.

It localises to the cytoplasm. The catalysed reaction is tRNA(Val) + L-valine + ATP = L-valyl-tRNA(Val) + AMP + diphosphate. In terms of biological role, catalyzes the attachment of valine to tRNA(Val). As ValRS can inadvertently accommodate and process structurally similar amino acids such as threonine, to avoid such errors, it has a 'posttransfer' editing activity that hydrolyzes mischarged Thr-tRNA(Val) in a tRNA-dependent manner. This chain is Valine--tRNA ligase, found in Deinococcus radiodurans (strain ATCC 13939 / DSM 20539 / JCM 16871 / CCUG 27074 / LMG 4051 / NBRC 15346 / NCIMB 9279 / VKM B-1422 / R1).